A 603-amino-acid polypeptide reads, in one-letter code: Elongation factor 4 (603 aa).

Positions serine 7–lysine 191 constitute a tr-type G domain. GTP contacts are provided by residues aspartate 19–threonine 24 and asparagine 138–aspartate 141.

This sequence belongs to the TRAFAC class translation factor GTPase superfamily. Classic translation factor GTPase family. LepA subfamily.

The protein localises to the cell inner membrane. It catalyses the reaction GTP + H2O = GDP + phosphate + H(+). Its function is as follows. Required for accurate and efficient protein synthesis under certain stress conditions. May act as a fidelity factor of the translation reaction, by catalyzing a one-codon backward translocation of tRNAs on improperly translocated ribosomes. Back-translocation proceeds from a post-translocation (POST) complex to a pre-translocation (PRE) complex, thus giving elongation factor G a second chance to translocate the tRNAs correctly. Binds to ribosomes in a GTP-dependent manner. This chain is Elongation factor 4, found in Bradyrhizobium diazoefficiens (strain JCM 10833 / BCRC 13528 / IAM 13628 / NBRC 14792 / USDA 110).